The chain runs to 376 residues: Chaperone protein DnaJ (376 aa).

The region spanning 5 to 70 is the J domain; it reads DYYEVLGAAK…QKRAAYDQFG (66 aa). A CR-type zinc finger spans residues 134–212; it reads GCDEKIRIPT…CGGQGRVQNT (79 aa). Zn(2+) contacts are provided by C147, C150, C164, C167, C186, C189, C200, and C203. CXXCXGXG motif repeat units lie at residues 147-154, 164-171, 186-193, and 200-207; these read CDVCHGSG, CTTCGGVG, CPTCKGEG, and CGNCGGQG.

Belongs to the DnaJ family. In terms of assembly, homodimer. Requires Zn(2+) as cofactor.

The protein resides in the cytoplasm. Participates actively in the response to hyperosmotic and heat shock by preventing the aggregation of stress-denatured proteins and by disaggregating proteins, also in an autonomous, DnaK-independent fashion. Unfolded proteins bind initially to DnaJ; upon interaction with the DnaJ-bound protein, DnaK hydrolyzes its bound ATP, resulting in the formation of a stable complex. GrpE releases ADP from DnaK; ATP binding to DnaK triggers the release of the substrate protein, thus completing the reaction cycle. Several rounds of ATP-dependent interactions between DnaJ, DnaK and GrpE are required for fully efficient folding. Also involved, together with DnaK and GrpE, in the DNA replication of plasmids through activation of initiation proteins. This Alcanivorax borkumensis (strain ATCC 700651 / DSM 11573 / NCIMB 13689 / SK2) protein is Chaperone protein DnaJ.